The chain runs to 146 residues: Putative pre-16S rRNA nuclease (146 aa).

The protein belongs to the YqgF nuclease family.

It localises to the cytoplasm. Its function is as follows. Could be a nuclease involved in processing of the 5'-end of pre-16S rRNA. In Burkholderia mallei (strain SAVP1), this protein is Putative pre-16S rRNA nuclease.